Here is a 125-residue protein sequence, read N- to C-terminus: C-X-C motif chemokine 9 (125 aa).

The N-terminal stretch at 1-22 (MKKSGVLFLLGIILLVLIGVQG) is a signal peptide. Disulfide bonds link Cys-31-Cys-58 and Cys-33-Cys-74. Positions 93–125 (VSQKKKQKNGKKHQKKKVLKVRKSQRSRQKKTT) are disordered. Residues 94-125 (SQKKKQKNGKKHQKKKVLKVRKSQRSRQKKTT) are compositionally biased toward basic residues.

The protein belongs to the intercrine alpha (chemokine CxC) family.

It localises to the secreted. Its function is as follows. Cytokine that affects the growth, movement, or activation state of cells that participate in immune and inflammatory response. Chemotactic for activated T-cells. Binds to CXCR3. The polypeptide is C-X-C motif chemokine 9 (CXCL9) (Homo sapiens (Human)).